We begin with the raw amino-acid sequence, 336 residues long: 3-isopropylmalate dehydrogenase (336 aa).

The substrate site is built by Arg-86, Arg-96, Arg-117, and Asp-201. Asp-201, Asp-225, and Asp-229 together coordinate Mg(2+). 258–270 contributes to the NAD(+) binding site; it reads GAAFDIAGKGIAN.

This sequence belongs to the isocitrate and isopropylmalate dehydrogenases family. In terms of assembly, homotetramer. It depends on Mg(2+) as a cofactor. The cofactor is Mn(2+).

The protein localises to the cytoplasm. It carries out the reaction (2R,3S)-3-isopropylmalate + NAD(+) = 4-methyl-2-oxopentanoate + CO2 + NADH. It functions in the pathway amino-acid biosynthesis; L-leucine biosynthesis; L-leucine from 3-methyl-2-oxobutanoate: step 3/4. Catalyzes the oxidation of 3-carboxy-2-hydroxy-4-methylpentanoate (3-isopropylmalate) to 3-carboxy-4-methyl-2-oxopentanoate. The product decarboxylates to 4-methyl-2 oxopentanoate. The protein is 3-isopropylmalate dehydrogenase (leuB) of Saccharolobus solfataricus (strain ATCC 35092 / DSM 1617 / JCM 11322 / P2) (Sulfolobus solfataricus).